A 187-amino-acid polypeptide reads, in one-letter code: Adenylate kinase (187 aa).

Residue 10 to 15 participates in ATP binding; that stretch reads GSGKGT. Residues 30-59 form an NMP region; that stretch reads STGDMLRAEIAAGTELGKQAKTVMDAGNLV. Residues Thr-31, Arg-36, 57 to 59, 85 to 88, and Gln-92 each bind AMP; these read NLV and GYPR. The tract at residues 126-136 is LID; the sequence is GRAKEQGRADD. Arg-127 contributes to the ATP binding site. Residues Arg-133 and Arg-144 each coordinate AMP. Gly-172 lines the ATP pocket.

This sequence belongs to the adenylate kinase family. Monomer.

It localises to the cytoplasm. It catalyses the reaction AMP + ATP = 2 ADP. It functions in the pathway purine metabolism; AMP biosynthesis via salvage pathway; AMP from ADP: step 1/1. Functionally, catalyzes the reversible transfer of the terminal phosphate group between ATP and AMP. Plays an important role in cellular energy homeostasis and in adenine nucleotide metabolism. This Stenotrophomonas maltophilia (strain K279a) protein is Adenylate kinase.